A 259-amino-acid polypeptide reads, in one-letter code: Acetylglutamate kinase (259 aa).

Substrate contacts are provided by residues 45-46 (GG), Arg67, and Asn159.

This sequence belongs to the acetylglutamate kinase family. ArgB subfamily.

The protein resides in the cytoplasm. The enzyme catalyses N-acetyl-L-glutamate + ATP = N-acetyl-L-glutamyl 5-phosphate + ADP. The protein operates within amino-acid biosynthesis; L-arginine biosynthesis; N(2)-acetyl-L-ornithine from L-glutamate: step 2/4. In terms of biological role, catalyzes the ATP-dependent phosphorylation of N-acetyl-L-glutamate. The polypeptide is Acetylglutamate kinase (Aeromonas salmonicida (strain A449)).